A 137-amino-acid chain; its full sequence is FAD synthase (137 aa).

ATP-binding positions include 5 to 6 (TF), 10 to 13 (HPGH), and Asp-88.

Belongs to the archaeal FAD synthase family. As to quaternary structure, homodimer. It depends on a divalent metal cation as a cofactor.

The catalysed reaction is FMN + ATP + H(+) = FAD + diphosphate. The protein operates within cofactor biosynthesis; FAD biosynthesis; FAD from FMN: step 1/1. Its function is as follows. Catalyzes the transfer of the AMP portion of ATP to flavin mononucleotide (FMN) to produce flavin adenine dinucleotide (FAD) coenzyme. This Archaeoglobus fulgidus (strain ATCC 49558 / DSM 4304 / JCM 9628 / NBRC 100126 / VC-16) protein is FAD synthase.